The primary structure comprises 326 residues: F-box/LRR-repeat protein 12 (326 aa).

The F-box domain maps to 1–47 (MATLVELPDSVLLEIFSYLPVRDRIRISRVCHRWKRLVDDRWLWRHV). 8 LRR repeats span residues 51 to 78 (LYTMRPKVMWHLLRRYMASRLHSLRMGG), 86 to 111 (APQLSPALLRALGQKCPNLKRLCLHV), 113 to 133 (DLSMVPITSLPSTLRTLELHS), 161 to 185 (VPAFRDEHLQGLTRFRALRSLVLGG), 186 to 211 (TYRVTETGLDAGLQELSYLQRLEVLG), 212 to 236 (CTLSADSTLLAISRHLRDVRKIRLT), 237 to 261 (VRGLSAPGLAVLEGMPALESLCLQG), and 266 to 291 (PEMPSPTEILSSCLTMPKLRVLELQG).

Interacts with SKP1 and CUL1.

It functions in the pathway protein modification; protein ubiquitination. Its function is as follows. Substrate-recognition component of the SCF (SKP1-CUL1-F-box protein)-type E3 ubiquitin ligase complex. Mediates the polyubiquitination and proteasomal degradation of CAMK1 leading to disruption of cyclin D1/CDK4 complex assembly which results in G1 cell cycle arrest in lung epithelia. The sequence is that of F-box/LRR-repeat protein 12 (FBXL12) from Homo sapiens (Human).